The chain runs to 424 residues: Tol-Pal system protein TolB (424 aa).

Residues 1-16 (MKQLLVLILSLYTTLA) form the signal peptide.

The protein belongs to the TolB family. The Tol-Pal system is composed of five core proteins: the inner membrane proteins TolA, TolQ and TolR, the periplasmic protein TolB and the outer membrane protein Pal. They form a network linking the inner and outer membranes and the peptidoglycan layer.

Its subcellular location is the periplasm. Functionally, part of the Tol-Pal system, which plays a role in outer membrane invagination during cell division and is important for maintaining outer membrane integrity. In Ruthia magnifica subsp. Calyptogena magnifica, this protein is Tol-Pal system protein TolB.